The primary structure comprises 397 residues: Dual-specificity RNA methyltransferase RlmN (397 aa).

Glu-130 serves as the catalytic Proton acceptor. In terms of domain architecture, Radical SAM core spans 138-377 (VEDRGAVCIS…ASPIRTPRGR (240 aa)). Cys-145 and Cys-383 are joined by a disulfide. Cys-152, Cys-156, and Cys-159 together coordinate [4Fe-4S] cluster. S-adenosyl-L-methionine-binding positions include 209–210 (GE), Ser-241, 263–265 (SLH), and Asn-340. The active-site S-methylcysteine intermediate is Cys-383.

It belongs to the radical SAM superfamily. RlmN family. The cofactor is [4Fe-4S] cluster.

Its subcellular location is the cytoplasm. It carries out the reaction adenosine(2503) in 23S rRNA + 2 reduced [2Fe-2S]-[ferredoxin] + 2 S-adenosyl-L-methionine = 2-methyladenosine(2503) in 23S rRNA + 5'-deoxyadenosine + L-methionine + 2 oxidized [2Fe-2S]-[ferredoxin] + S-adenosyl-L-homocysteine. It catalyses the reaction adenosine(37) in tRNA + 2 reduced [2Fe-2S]-[ferredoxin] + 2 S-adenosyl-L-methionine = 2-methyladenosine(37) in tRNA + 5'-deoxyadenosine + L-methionine + 2 oxidized [2Fe-2S]-[ferredoxin] + S-adenosyl-L-homocysteine. Specifically methylates position 2 of adenine 2503 in 23S rRNA and position 2 of adenine 37 in tRNAs. m2A2503 modification seems to play a crucial role in the proofreading step occurring at the peptidyl transferase center and thus would serve to optimize ribosomal fidelity. The protein is Dual-specificity RNA methyltransferase RlmN of Granulibacter bethesdensis (strain ATCC BAA-1260 / CGDNIH1).